The sequence spans 464 residues: Sulfoacetaldehyde dehydrogenase (acylating) (464 aa).

The active-site Nucleophile is the cysteine 241.

The protein belongs to the aldehyde dehydrogenase family.

It carries out the reaction sulfoacetaldehyde + NADP(+) + CoA = sulfoacetyl-CoA + NADPH + H(+). In terms of biological role, involved in the degradation of sulfoacetate. Catalyzes the conversion of sulfoacetyl-CoA and NADPH to sulfoacetaldehyde, CoA and NADP(+). A much lower level of activity (1%) is observed when NADP(+) is replaced with NAD(+). The sequence is that of Sulfoacetaldehyde dehydrogenase (acylating) from Bilophila wadsworthia (strain 3_1_6).